Here is a 454-residue protein sequence, read N- to C-terminus: Oxygen-dependent coproporphyrinogen-III oxidase, mitochondrial (454 aa).

Residues 1–110 constitute a mitochondrion transit peptide; the sequence is MALQLGRLSS…MLPKTSGTRA (110 aa). Residues 43–70 are disordered; it reads AAGRVCRPPGPAGTEQSRGLGHGSTSRG. Ser112 is subject to Phosphoserine. The interval 193 to 202 is important for dimerization; it reads VLQDGCVFEK. Ser244 lines the coproporphyrinogen III pocket. Residue His258 is the Proton donor of the active site. 260–262 is a coproporphyrinogen III binding site; that stretch reads NYR. The segment at 392-428 is important for dimerization; it reads YVEFNLLYDRGTKFGLFTPGSRIESILMSLPLTARWE. Lys404 is subject to N6-acetyllysine; alternate. Lys404 is subject to N6-succinyllysine; alternate. Residue 411 to 413 coordinates coproporphyrinogen III; it reads GSR.

It belongs to the aerobic coproporphyrinogen-III oxidase family. As to quaternary structure, homodimer.

The protein resides in the mitochondrion intermembrane space. It catalyses the reaction coproporphyrinogen III + O2 + 2 H(+) = protoporphyrinogen IX + 2 CO2 + 2 H2O. Its pathway is porphyrin-containing compound metabolism; protoporphyrin-IX biosynthesis; protoporphyrinogen-IX from coproporphyrinogen-III (O2 route): step 1/1. Catalyzes the aerobic oxidative decarboxylation of propionate groups of rings A and B of coproporphyrinogen-III to yield the vinyl groups in protoporphyrinogen-IX and participates to the sixth step in the heme biosynthetic pathway. The sequence is that of Oxygen-dependent coproporphyrinogen-III oxidase, mitochondrial from Homo sapiens (Human).